The primary structure comprises 144 residues: Putative sugar phosphate isomerase RT0290 (144 aa).

His12 contributes to the substrate binding site. His101 serves as the catalytic Proton donor. Residue Arg135 coordinates substrate.

This sequence belongs to the LacAB/RpiB family.

This chain is Putative sugar phosphate isomerase RT0290, found in Rickettsia typhi (strain ATCC VR-144 / Wilmington).